Reading from the N-terminus, the 392-residue chain is Phosphoglycerate kinase (392 aa).

Substrate is bound by residues 21 to 23 (DFN), arginine 36, 59 to 62 (HLGR), arginine 117, and arginine 150. Residues lysine 200, glycine 288, glutamate 319, and 345-348 (GGDS) each bind ATP.

This sequence belongs to the phosphoglycerate kinase family. In terms of assembly, monomer.

The protein resides in the cytoplasm. The catalysed reaction is (2R)-3-phosphoglycerate + ATP = (2R)-3-phospho-glyceroyl phosphate + ADP. It participates in carbohydrate degradation; glycolysis; pyruvate from D-glyceraldehyde 3-phosphate: step 2/5. In Rubrobacter xylanophilus (strain DSM 9941 / JCM 11954 / NBRC 16129 / PRD-1), this protein is Phosphoglycerate kinase.